The primary structure comprises 277 residues: Outer kinetochore KNL1 complex subunit ZWINT (277 aa).

The tract at residues 80–155 (ASEDTSRQKA…MEKRRAVQNQ (76 aa)) is interaction with NDC80 and ZW10. A coiled-coil region spans residues 104-217 (REHVEAIKIG…RYQTFLQLLY (114 aa)). Positions 228–277 (AEAEAENLPDDKPQQPTRPQEQSTGDTMGRDPGVSFKAVGLQPAGDVNLP) are disordered. Polar residues predominate over residues 241-253 (QQPTRPQEQSTGD).

Component of the KNL1 complex composed of KNL1 and ZWINT. Part of the ten-subunit outer kinetochore KMN network that includes the KNL1, MIS12 and NDC80 complexes; a bioriented kinetochore contains approximately 150 copies of the network. Interacts with the MIS12 complex subunits MIS12 DSN1, and PMF1. Interacts with the NDC80 complex subunit NDC80 during mitosis. Interacts with ZW10. Interacts with CETN3.

The protein resides in the nucleus. The protein localises to the chromosome. It localises to the centromere. Its subcellular location is the kinetochore. Acts as a component of the outer kinetochore KNL1 complex that serves as a docking point for spindle assembly checkpoint components and mediates microtubule-kinetochore interactions. Kinetochores, consisting of a centromere-associated inner segment and a microtubule-contacting outer segment, play a crucial role in chromosome segregation by mediating the physical connection between centromeric DNA and spindle microtubules. The outer kinetochore is made up of the ten-subunit KMN network, comprising the MIS12, NDC80 and KNL1 complexes, and auxiliary microtubule-associated components; together they connect the outer kinetochore with the inner kinetochore, bind microtubules, and mediate interactions with mitotic checkpoint proteins that delay anaphase until chromosomes are bioriented on the spindle. Targets the RZZ complex to the kinetochore at prometaphase. Recruits MAD2L1 to the kinetochore, but is not required for BUB1B localization. In addition to orienting mitotic chromosomes, it is also essential for alignment of homologous chromosomes during meiotic metaphase I. In meiosis I, required to activate the spindle assembly checkpoint at unattached kinetochores to correct erroneous kinetochore-microtubule attachments. The chain is Outer kinetochore KNL1 complex subunit ZWINT (ZWINT) from Homo sapiens (Human).